The primary structure comprises 412 residues: Putative F-box protein At3g22940 (412 aa).

The region spanning 1-38 (MPLEEILSRLPLKSTRAVRSTCKKWDSLFKNRSFISKA) is the F-box domain.

The polypeptide is Putative F-box protein At3g22940 (Arabidopsis thaliana (Mouse-ear cress)).